A 511-amino-acid polypeptide reads, in one-letter code: Bifunctional purine biosynthesis protein PurH (511 aa).

An MGS-like domain is found at 1-145 (MKKRALVSVS…KNHKFVSVIV (145 aa)).

The protein belongs to the PurH family.

It carries out the reaction (6R)-10-formyltetrahydrofolate + 5-amino-1-(5-phospho-beta-D-ribosyl)imidazole-4-carboxamide = 5-formamido-1-(5-phospho-D-ribosyl)imidazole-4-carboxamide + (6S)-5,6,7,8-tetrahydrofolate. It catalyses the reaction IMP + H2O = 5-formamido-1-(5-phospho-D-ribosyl)imidazole-4-carboxamide. The protein operates within purine metabolism; IMP biosynthesis via de novo pathway; 5-formamido-1-(5-phospho-D-ribosyl)imidazole-4-carboxamide from 5-amino-1-(5-phospho-D-ribosyl)imidazole-4-carboxamide (10-formyl THF route): step 1/1. It functions in the pathway purine metabolism; IMP biosynthesis via de novo pathway; IMP from 5-formamido-1-(5-phospho-D-ribosyl)imidazole-4-carboxamide: step 1/1. This is Bifunctional purine biosynthesis protein PurH from Bacillus cereus (strain Q1).